We begin with the raw amino-acid sequence, 187 residues long: High affinity copper uptake protein 1 (187 aa).

At 1–65 (MRMNHMEMHH…SSLVINTPGE (65 aa)) the chain is on the extracellular side. The Bis-His motif signature appears at 9-10 (HH). Asn19 is a glycosylation site (N-linked (GlcNAc...) asparagine). Thr30 is a glycosylation site (O-linked (GalNAc...) threonine). Residues 66–86 (MAGAFVAVFLLAMFYEGLKIA) form a helical membrane-spanning segment. Residues 87–129 (REGLLRKSQVSIRYNSMPVPGPNGTILMETHKTVGQQMLSFPH) are Cytoplasmic-facing. The residue at position 111 (Thr111) is a Phosphothreonine. A helical transmembrane segment spans residues 130–150 (LLQTVLHIIQVVISYFLMLIF). The Extracellular segment spans residues 151–153 (MTY). The chain crosses the membrane as a helical span at residues 154–174 (NGYLCIAVAAGAGTGYFLFSW). Residues 175–187 (KKAVVVDITEHCH) lie on the Cytoplasmic side of the membrane. Residue Cys186 is modified to Cysteine sulfenic acid (-SOH).

The protein belongs to the copper transporter (Ctr) (TC 1.A.56) family. SLC31A subfamily. As to quaternary structure, homotrimer; is stabilized by cisplatin via interactions between cisplatin and the methionine-rich clusters, and could be crucial for the copper(2+) reduction process and copper(1+) stabilization. Heterotrimer between SLC31A1, CCS and SOD1; this heterotrimer is copper(1+)-mediated and its maintenance is regulated through SOD1 activation. Interacts with KDR; this interaction is induced upon VEGFA stimulation leading to SLC31A1 and KDR subsequent co-internalization to early endosomes, thereby activating KDR downstream signaling in endothelial cells. Interacts (via C-terminal domain) with ATOX1 (via dimer form); this interaction improves ATOX1 stability and controls intracellular copper(1+) levels. Interacts with SLC31A2; this interaction stabilizes SLC31A2 and protects its from ubiquitination and degradation. Interacts (via C-terminal domain) with CCS; this interaction is copper(1+)-mediated. In terms of processing, O-Glycosylation at Thr-30 protects from proteolytic cleavage in the N-terminal extracellular domain. Post-translationally, proteolytic cleavage, leading to a truncated form, is facilitated by SLC31A2 and initiated preferentially by CTSL and to a minor extend by CTSB in endolysosomal compartments. A post-CTSL/cathepsin L processing occurs to yield to the fully truncated form. Sulfenylated at Cys-186 after stimulation with VEGFA, which induces SLC31A1-KDR disulfide bond formation and their co-internalization to early endosomes, driving to a sustained VEGFR2 signaling.

The protein resides in the cell membrane. The protein localises to the early endosome membrane. Its subcellular location is the recycling endosome membrane. It is found in the apical cell membrane. It localises to the late endosome membrane. The protein resides in the basolateral cell membrane. It carries out the reaction Cu(+)(out) = Cu(+)(in). The enzyme catalyses Ag(+)(out) = Ag(+)(in). Its activity is regulated as follows. Copper uptake is inhibited by cold temperature, silver and zinc ions. Platinum-containing chemotherapeutic agents uptake is inhibited by cold temperature and copper. Its function is as follows. Uniporter that mediates the transport of copper(1+) from the extracellular space to the cytoplasm, across the plasma membrane. Then, delivers directly copper(1+) to specific chaperone such as ATOX1, via a copper(1+)- mediated transient interaction between the C-terminal domain and a copper(1+) chaperone, thus controlling intracellular copper(1+) levels. May function in copper(1+) import from the apical membrane thus may drive intestinal copper absorption. The copper(1+) transport mechanism is sodium-independent, saturable and of high-affinity. Also mediates the uptake of silver(1+). May function in the influx of the platinum-containing chemotherapeutic agents. The platinum-containing chemotherapeutic agents uptake is saturable. Also participates in the first step of copper(2+) acquisition by cells through a direct transfer of copper(2+) from copper(2+) carriers in blood, such as ALB to the N-terminal domain of SLC31A1, leading to copper(2+) reduction and probably followed by copper(1+) stabilization. In addition, functions as a redox sensor to promote angiogenesis in endothelial cells, in a copper(1+) transport independent manner, by transmitting the VEGF-induced ROS signal through a sulfenylation at Cys-189 leading to a subsequent disulfide bond formation between SLC31A1 and KDR. The SLC31A1-KDR complex is then co-internalized to early endosomes, driving a sustained VEGFR2 signaling. Functionally, mobilizes copper(1+) out of the endosomal compartment, making copper(1+) available for export out of the cells. This Rattus norvegicus (Rat) protein is High affinity copper uptake protein 1.